The chain runs to 406 residues: Tyrosine--tRNA ligase (406 aa).

Tyrosine 35 is an L-tyrosine binding site. Residues 40–49 (PTADSLHVGH) carry the 'HIGH' region motif. L-tyrosine-binding residues include tyrosine 168 and glutamine 172. Positions 228 to 232 (KMGKT) match the 'KMSKS' region motif. An ATP-binding site is contributed by lysine 231. The region spanning 340–404 (SELLDILVEA…RGKKNYNKIV (65 aa)) is the S4 RNA-binding domain.

It belongs to the class-I aminoacyl-tRNA synthetase family. TyrS type 1 subfamily. As to quaternary structure, homodimer.

Its subcellular location is the cytoplasm. It catalyses the reaction tRNA(Tyr) + L-tyrosine + ATP = L-tyrosyl-tRNA(Tyr) + AMP + diphosphate + H(+). In terms of biological role, catalyzes the attachment of tyrosine to tRNA(Tyr) in a two-step reaction: tyrosine is first activated by ATP to form Tyr-AMP and then transferred to the acceptor end of tRNA(Tyr). The polypeptide is Tyrosine--tRNA ligase (Clostridium perfringens (strain ATCC 13124 / DSM 756 / JCM 1290 / NCIMB 6125 / NCTC 8237 / Type A)).